Consider the following 513-residue polypeptide: MEISWGRALWRNFLGQSPDWYKLALIIFLIVNPLIFLISPFVAGWLLVAEFIFTLAMALKCYPLLPGGLLAIEAVFIGMTSAEHVREEVAANLEVLLLLMFMVAGIYFMKQLLLFIFTRLLLSIRSKMLLSLSFCVAAAFLSAFLDALTVVAVVISVAVGFYGIYHRVASSRTEDTDLQDDSHIDKHYKVVLEQFRGFLRSLMMHAGVGTALGGVMTMVGEPQNLIIAKAAGWHFGDFFLRMSPVTVPVLICGLLTCLLVEKLRWFGYGETLPEKVREVLQQFDDQSRLQRTRQDKIRLIVQAIIGVWLVTALALHLAEVGLIGLSVIILATSLTGVTDEHAIGKAFTESLPFTALLTVFFSVVAVIIDQQLFSPIIQFVLQASEHAQLSLFYIFNGLLSSISDNVFVGTIYINEAKAAMKSGAITLKQYELLAVAINTGTNLPSVATPNGQAAFLFLLTSALAPLIRLSYGRMVWMALPYTLVLTLVGLLCVEFTLAPVTEWFMQMGWIATL.

Transmembrane regions (helical) follow at residues 23 to 43, 52 to 72, 97 to 117, 120 to 140, 144 to 164, 202 to 222, 238 to 258, 303 to 323, 348 to 368, 391 to 411, 447 to 467, and 475 to 495; these read LALIIFLIVNPLIFLISPFVA, IFTLAMALKCYPLLPGGLLAI, LLLMFMVAGIYFMKQLLLFIF, LLLSIRSKMLLSLSFCVAAAF, FLDALTVVAVVISVAVGFYGI, LMMHAGVGTALGGVMTMVGEP, FFLRMSPVTVPVLICGLLTCL, AIIGVWLVTALALHLAEVGLI, TESLPFTALLTVFFSVVAVII, LFYIFNGLLSSISDNVFVGTI, ATPNGQAAFLFLLTSALAPLI, and VWMALPYTLVLTLVGLLCVEF.

It belongs to the NhaB Na(+)/H(+) (TC 2.A.34) antiporter family.

The protein resides in the cell inner membrane. The catalysed reaction is 2 Na(+)(in) + 3 H(+)(out) = 2 Na(+)(out) + 3 H(+)(in). Na(+)/H(+) antiporter that extrudes sodium in exchange for external protons. In Escherichia coli O45:K1 (strain S88 / ExPEC), this protein is Na(+)/H(+) antiporter NhaB.